The chain runs to 310 residues: MNLVFGMIASIGELLIDLISVEEGDLKDVRLFEKHPGGAPANVAVGVSRLGVKSSLISKVGNDPFGEYLIEELSKENVDTRGIVKDEKKHTGIVFVQLKGASPSFLLYDDVAYFNMTLNDINWDIVEEAKIVNFGSVILARNPSRETVMKVIKKIKGSSLIAFDVNLRLDLWRGQEEEMIKVLEESIKLADIVKASEEEVLYLENQGVEVKGSMLTAITLGPKGCRLIKNETVVDVPSYNVNPLDTTGAGDAFMAALLVGILKLKGLDLLKLGKFANLVAALSTQKRGAWSTPRKDELLKYKEAREVLAP.

Positions 194, 219, and 224 each coordinate ATP.

This sequence belongs to the carbohydrate kinase PfkB family.

The protein is Putative sugar kinase PH1459 of Pyrococcus horikoshii (strain ATCC 700860 / DSM 12428 / JCM 9974 / NBRC 100139 / OT-3).